We begin with the raw amino-acid sequence, 780 residues long: Mediator of RNA polymerase II transcription subunit 15 (780 aa).

An interaction with nhr-49 region spans residues 1–124; the sequence is MSEEDWPSPK…PQPTSAQARN (124 aa). The tract at residues 2–96 is interaction with sbp-1; sequence SEEDWPSPKF…SPPCTTAALL (95 aa). Disordered stretches follow at residues 91 to 152, 166 to 363, and 564 to 597; these read TTAA…APSA, PSPD…QGMM, and GPGPIGRDRNSMSGSSMSGPSSGAPSMNPMGTPN. The span at 125 to 139 shows a compositional bias: low complexity; it reads PPVTVATTQASTTPS. Positions 225–245 are enriched in gly residues; sequence PPNGYGGYGMMNGPPGSGAPM. Polar residues predominate over residues 296–316; it reads QGATPTGPSSVLESLINQPQQ. Composition is skewed to low complexity over residues 333–353 and 574–594; these read AAQRAAAQQQQQQQQQQQQQR and SMSGSSMSGPSSGAPSMNPMG.

The protein belongs to the Mediator complex subunit 15 family. As to quaternary structure, component of the Mediator complex. Interacts with nhr-49, nhr-64 and sbp-1. Expressed in the intestine and head neurons.

It is found in the nucleus. Its function is as follows. Component of the Mediator complex, a coactivator involved in regulated gene transcription of nearly all RNA polymerase II-dependent genes. Mediator functions as a bridge to convey information from gene-specific regulatory proteins to the basal RNA polymerase II transcription machinery. Mediator is recruited to promoters by direct interactions with regulatory proteins and serves as a scaffold for the assembly of a functional preinitiation complex with RNA polymerase II and the general transcription factors. Required for regulated expression of genes controlling fatty acid desaturation by transcription factors including sbp-1 and nhr-49. Involved in the response to simulated microgravity, in concert with sbp-1, probably acting in the intestine. The protein is Mediator of RNA polymerase II transcription subunit 15 (mdt-15) of Caenorhabditis elegans.